A 906-amino-acid chain; its full sequence is Glutamate receptor 1 (906 aa).

Residues 1 to 18 (MQHIFAFFCTGFLGAVVG) form the signal peptide. The Extracellular portion of the chain corresponds to 19 to 536 (ANFPNNIQIG…GVFSFLDPLA (518 aa)). N-linked (GlcNAc...) asparagine glycosylation is found at Asn63, Asn249, Asn257, Asn363, Asn401, and Asn406. An intrachain disulfide couples Cys75 to Cys323. L-glutamate is bound by residues Pro492, Thr494, and Arg499. Residues 537 to 557 (YEIWMCIVFAYIGVSVVLFLV) traverse the membrane as a helical segment. At 558 to 584 (SRFSPYEWHSEEFEEGRDQTTSDQSNE) the chain is on the cytoplasmic side. Residues 585–600 (FGIFNSLWFSLGAFMQ) constitute an intramembrane region (helical; Pore-forming). An intramembrane segment occupies 601–603 (QGC). A lipid anchor (S-palmitoyl cysteine) is attached at Cys603. Topologically, residues 604–609 (DISPRS) are cytoplasmic. Residues 610–630 (LSGRIVGGVWWFFTLIIISSY) traverse the membrane as a helical segment. Over 631–805 (TANLAAFLTV…DKTSALSLSN (175 aa)) the chain is Extracellular. A Phosphoserine modification is found at Ser645. 2 residues coordinate L-glutamate: Ser668 and Thr669. Ser710 bears the Phosphoserine mark. An L-glutamate-binding site is contributed by Glu719. Cys732 and Cys787 are joined by a disulfide. The helical transmembrane segment at 806–826 (VAGVFYILIGGLGLAMLVALI) threads the bilayer. At 827-906 (EFCYKSRSES…SGMPLGATGL (80 aa)) the chain is on the cytoplasmic side. Cys829 carries S-palmitoyl cysteine lipidation. Ser849 and Ser863 each carry phosphoserine. The tract at residues 861-880 (RNSGAGASSAGSGENGRVVS) is disordered. Residues 863–872 (SGAGASSAGS) show a composition bias toward low complexity. Residues 903–906 (ATGL) carry the PDZ-binding motif.

Belongs to the glutamate-gated ion channel (TC 1.A.10.1) family. GRIA1 subfamily. As to quaternary structure, homotetramer or heterotetramer of pore-forming glutamate receptor subunits; heteromeric assembly can be the result of both receptor subtype and flip-flop forms and according the composition, one partner can be dominant with respect to the fast desensitizing current component, whereas the other can determine the steady-state component. Tetramers may be formed by the dimerization of dimers. Found in a complex with GRIA2, GRIA3, GRIA4, CNIH2, CNIH3, CACNG2, CACNG3, CACNG4, CACNG5, CACNG7 and CACNG8. Interacts with HIP1 and RASGRF2. Interacts with SYNDIG1 and GRIA2. Interacts with DLG1 (via C-terminus). Interacts with LRFN1. Interacts with PRKG2. Interacts with CNIH2 and CACNG2. Interacts with CACNG5; this interaction modulates the gating. Interacts (via C-terminus) with PDLIM4 (via LIM domain); this interaction as well as the interaction of PDLIM4 with alpha-actinin is required for their colocalization in early endosomes. Interacts with SNX27 (via PDZ domain); the interaction is required for recycling to the plasma membrane when endocytosed and prevent degradation in lysosomes. Interacts (via PDZ-binding motif) with SHANK3 (via PDZ domain). Interacts with CACNG3; associates GRIA1 with the adapter protein complex 4 (AP-4) to target GRIA1 to the somatodendritic compartment of neurons. Interacts with CACNG2; this interaction mediates traffick to the plasma membrane and modulation of desensitization. Interaction with CNIH2 and CNIH3; this interaction promotes expression at the plasma membrane and extensively modulates their gating properties by slowing deactivation and desensitization kinetics. Found in a complex with GRIA2, GRIA3, GRIA4, DLG4, CACNG8 and CNIH2. Post-translationally, phosphorylated at Ser-645. Phosphorylated at Ser-710 by PKC. Phosphorylated at Ser-849 by PKC, PKA and CAMK2. Phosphorylated at Ser-863 by PKC, PKA and PRKG2. Phosphorylation of Ser-863 is reduced by induction of long-term depression and increased by induction of long-term potentiation. Palmitoylated. Depalmitoylated by CPT1C and upon L-glutamate stimulation. ZDHHC3/GODZ specifically palmitoylates Cys-603, which leads to Golgi retention and decreased cell surface expression. In contrast, Cys-829 palmitoylation does not affect cell surface expression but regulates stimulation-dependent endocytosis.

It localises to the cell membrane. The protein localises to the endoplasmic reticulum membrane. Its subcellular location is the postsynaptic cell membrane. It is found in the postsynaptic density membrane. The protein resides in the cell projection. It localises to the dendrite. The protein localises to the dendritic spine. Its subcellular location is the early endosome membrane. It is found in the recycling endosome membrane. The protein resides in the presynapse. It localises to the synapse. It catalyses the reaction Ca(2+)(in) = Ca(2+)(out). The catalysed reaction is Na(+)(in) = Na(+)(out). It carries out the reaction Mg(2+)(in) = Mg(2+)(out). The enzyme catalyses Li(+)(in) = Li(+)(out). It catalyses the reaction K(+)(in) = K(+)(out). The catalysed reaction is Sr(2+)(in) = Sr(2+)(out). Functionally, ionotropic glutamate receptor that functions as a ligand-gated cation channel, gated by L-glutamate and glutamatergic agonists such as alpha-amino-3-hydroxy-5-methyl-4-isoxazolepropionic acid (AMPA), quisqualic acid, and kainic acid. L-glutamate acts as an excitatory neurotransmitter at many synapses in the central nervous system. Binding of the excitatory neurotransmitter L-glutamate induces a conformation change, leading to the opening of the cation channel, and thereby converts the chemical signal to an electrical impulse upon entry of monovalent and divalent cations such as sodium and calcium. The receptor then desensitizes rapidly and enters in a transient inactive state, characterized by the presence of bound agonist. In the presence of CACNG2 or CACNG4 or CACNG7 or CACNG8, shows resensitization which is characterized by a delayed accumulation of current flux upon continued application of L-glutamate. Calcium (Ca(2+)) permeability depends on subunits composition and, heteromeric channels containing edited GRIA2 subunit are calcium-impermeable. Also permeable to other divalents cations such as strontium(2+) and magnesium(2+) and monovalent cations such as potassium(1+) and lithium(1+). This chain is Glutamate receptor 1, found in Macaca fascicularis (Crab-eating macaque).